The sequence spans 475 residues: ATP synthase subunit beta (475 aa).

154–161 (GGAGVGKT) lines the ATP pocket.

Belongs to the ATPase alpha/beta chains family. As to quaternary structure, F-type ATPases have 2 components, CF(1) - the catalytic core - and CF(0) - the membrane proton channel. CF(1) has five subunits: alpha(3), beta(3), gamma(1), delta(1), epsilon(1). CF(0) has three main subunits: a(1), b(2) and c(9-12). The alpha and beta chains form an alternating ring which encloses part of the gamma chain. CF(1) is attached to CF(0) by a central stalk formed by the gamma and epsilon chains, while a peripheral stalk is formed by the delta and b chains.

The protein resides in the cell inner membrane. The enzyme catalyses ATP + H2O + 4 H(+)(in) = ADP + phosphate + 5 H(+)(out). In terms of biological role, produces ATP from ADP in the presence of a proton gradient across the membrane. The catalytic sites are hosted primarily by the beta subunits. This chain is ATP synthase subunit beta, found in Hyphomonas neptunium (strain ATCC 15444).